We begin with the raw amino-acid sequence, 364 residues long: Uroporphyrinogen decarboxylase (364 aa).

Residues 28–32 (RQAGR), aspartate 78, tyrosine 160, threonine 215, and histidine 333 each bind substrate.

It belongs to the uroporphyrinogen decarboxylase family. As to quaternary structure, homodimer.

It is found in the cytoplasm. The catalysed reaction is uroporphyrinogen III + 4 H(+) = coproporphyrinogen III + 4 CO2. The protein operates within porphyrin-containing compound metabolism; protoporphyrin-IX biosynthesis; coproporphyrinogen-III from 5-aminolevulinate: step 4/4. Catalyzes the decarboxylation of four acetate groups of uroporphyrinogen-III to yield coproporphyrinogen-III. The polypeptide is Uroporphyrinogen decarboxylase (Burkholderia cenocepacia (strain ATCC BAA-245 / DSM 16553 / LMG 16656 / NCTC 13227 / J2315 / CF5610) (Burkholderia cepacia (strain J2315))).